A 398-amino-acid chain; its full sequence is Tryptophan synthase beta chain (398 aa).

Lys88 carries the N6-(pyridoxal phosphate)lysine modification.

Belongs to the TrpB family. Tetramer of two alpha and two beta chains. It depends on pyridoxal 5'-phosphate as a cofactor.

It carries out the reaction (1S,2R)-1-C-(indol-3-yl)glycerol 3-phosphate + L-serine = D-glyceraldehyde 3-phosphate + L-tryptophan + H2O. It participates in amino-acid biosynthesis; L-tryptophan biosynthesis; L-tryptophan from chorismate: step 5/5. In terms of biological role, the beta subunit is responsible for the synthesis of L-tryptophan from indole and L-serine. This is Tryptophan synthase beta chain from Actinobacillus succinogenes (strain ATCC 55618 / DSM 22257 / CCUG 43843 / 130Z).